We begin with the raw amino-acid sequence, 351 residues long: AA9 family lytic polysaccharide monooxygenase A (351 aa).

Residues 1 to 20 (MSNKAATLLAALSGAALVAA) form the signal peptide. H21 and H107 together coordinate Cu(2+). C76 and C196 form a disulfide bridge. Positions 182 and 191 each coordinate O2. Cu(2+) is bound at residue Y193. One can recognise a CBM1 domain in the interval 315-351 (GVAPKWGQCGGNGWTGPTVCASGSTCTVLNPYYSQCI).

It belongs to the polysaccharide monooxygenase AA9 family. Cu(2+) is required as a cofactor.

It localises to the secreted. The catalysed reaction is [(1-&gt;4)-beta-D-glucosyl]n+m + reduced acceptor + O2 = 4-dehydro-beta-D-glucosyl-[(1-&gt;4)-beta-D-glucosyl]n-1 + [(1-&gt;4)-beta-D-glucosyl]m + acceptor + H2O.. In terms of biological role, lytic polysaccharide monooxygenase (LPMO) that depolymerizes crystalline and amorphous polysaccharides via the oxidation of scissile alpha- or beta-(1-4)-glycosidic bonds, yielding C1 and C4 oxidation products. Catalysis by LPMOs requires the reduction of the active-site copper from Cu(II) to Cu(I) by a reducing agent and H(2)O(2) or O(2) as a cosubstrate. This chain is AA9 family lytic polysaccharide monooxygenase A, found in Podospora anserina (strain S / ATCC MYA-4624 / DSM 980 / FGSC 10383) (Pleurage anserina).